We begin with the raw amino-acid sequence, 465 residues long: MNLGGNRFVQIGNGMSNIMYTDANGAVRWEQISPPAGFPQQQRGRGRGHVAFGLPNTLDWLPGFVQATPNSITISNMGGIQISSAGVITAAINSEQNSWMLSSFNPSLKLTRQVTLTDFCDPTAERPGLPIIRLRHHLDAIGSSPSSTPPGRNPQELDEAWAALSELSVSGRSDTTGLRPSLLSLTFLVASRSGEYSDKAAAEAVRAHVLANYRDRRTEQRLDRFGEYLQAMVRTHVFPHKHMTVFGGLISHVIQDKLASLTAVAGGVQEGARTNNSAVPRSSVYVPACAFLDVDHELKLGDASAKFVYLIFVYSQRLRREGVRVYVAVSKFDEVAFEDAVSFLFHKARTESAIRGTEGADAPEPHPNAALPLQELSSSRCEPRCPPSRLNNREFTNALYQWAPDLRGRPNRTSCMYAAYIRLGAIASDPPRTTRRSERFGSVDMPVVWLENVRWDPQDWVECSY.

This sequence belongs to the herpesviridae TRX1 protein family. As to quaternary structure, interacts with TRX2, MCP and capsid vertex component 2/CVC2.

It is found in the virion. The protein resides in the host nucleus. Functionally, structural component of the T=16 icosahedral capsid. The capsid is composed of pentamers and hexamers of major capsid protein/MCP, which are linked together by heterotrimers called triplexes. These triplexes are formed by a single molecule of triplex protein 1/TRX1 and two copies of triplex protein 2/TRX2. Additionally, TRX1 is required for efficient transport of TRX2 to the nucleus, which is the site of capsid assembly. This Equus caballus (Horse) protein is Triplex capsid protein 1.